Reading from the N-terminus, the 464-residue chain is MANVGKVVQIVGAVLDVKFDSEQSLPNLLNALVIKLGDKEIVAEVAQHIGDDTVRCIAMSATDGLVRGMEVVDTGGPISVPVGDETLGRIFNVLGKPVDGKPAPKSAPKLPIHRPAPAYDELETTAEILETGIKVVDLLAPYLKGGKIGLFGGAGVGKTVLIQELINNIAKQHGGISVFSGVGERTREGNDLYGEMSESGVINKTALVFGQMNEPPGARMRVALTGLTMAEHFRDEQGQDVLLFVDNIFRFTQAGSEVSALLGRMPSAVGYQPTLATEMGALQERITSTKKGSITSVQAVYVPADDLTDPAPATTFSHLDAKTVLSRQISSLGIYPAVDPLESTSRILDPSIVGKEHYEVARGVQSILQRYKELQDIIAILGMDELSDEDKLIVARARKIQRFLSQSFTVAEQFTGNPGQYVPVKETVRGFKEILEGKHDDLPESAFLFVGTIEDAVRKAKGSM.

152–159 (GGAGVGKT) is an ATP binding site.

Belongs to the ATPase alpha/beta chains family. As to quaternary structure, F-type ATPases have 2 components, CF(1) - the catalytic core - and CF(0) - the membrane proton channel. CF(1) has five subunits: alpha(3), beta(3), gamma(1), delta(1), epsilon(1). CF(0) has three main subunits: a(1), b(2) and c(9-12). The alpha and beta chains form an alternating ring which encloses part of the gamma chain. CF(1) is attached to CF(0) by a central stalk formed by the gamma and epsilon chains, while a peripheral stalk is formed by the delta and b chains.

Its subcellular location is the cell membrane. The catalysed reaction is ATP + H2O + 4 H(+)(in) = ADP + phosphate + 5 H(+)(out). In terms of biological role, produces ATP from ADP in the presence of a proton gradient across the membrane. The catalytic sites are hosted primarily by the beta subunits. The protein is ATP synthase subunit beta of Clostridioides difficile (strain 630) (Peptoclostridium difficile).